Here is a 159-residue protein sequence, read N- to C-terminus: Phosphopantetheine adenylyltransferase (159 aa).

Ser-9 contacts substrate. ATP is bound by residues 9-10 (SF) and His-17. Residues Lys-41, Leu-73, and Lys-87 each coordinate substrate. ATP contacts are provided by residues 88–90 (GLR), Glu-98, and 122–128 (YSFLSSS).

This sequence belongs to the bacterial CoaD family. As to quaternary structure, homohexamer. Mg(2+) is required as a cofactor.

Its subcellular location is the cytoplasm. It carries out the reaction (R)-4'-phosphopantetheine + ATP + H(+) = 3'-dephospho-CoA + diphosphate. It participates in cofactor biosynthesis; coenzyme A biosynthesis; CoA from (R)-pantothenate: step 4/5. Functionally, reversibly transfers an adenylyl group from ATP to 4'-phosphopantetheine, yielding dephospho-CoA (dPCoA) and pyrophosphate. The chain is Phosphopantetheine adenylyltransferase from Streptomyces avermitilis (strain ATCC 31267 / DSM 46492 / JCM 5070 / NBRC 14893 / NCIMB 12804 / NRRL 8165 / MA-4680).